A 49-amino-acid chain; its full sequence is Large ribosomal subunit protein eL40 (49 aa).

The protein belongs to the eukaryotic ribosomal protein eL40 family.

This chain is Large ribosomal subunit protein eL40, found in Archaeoglobus fulgidus (strain ATCC 49558 / DSM 4304 / JCM 9628 / NBRC 100126 / VC-16).